The primary structure comprises 1111 residues: Protein NETWORKED 1C (1111 aa).

The NAB domain occupies 13–93 (YSWWWDSHNT…ERYNHATGVI (81 aa)). Coiled coils occupy residues 202-287 (SESE…KESS), 314-605 (ERAS…LISE), and 642-752 (KTIG…LESK). The interval 850–870 (TGGGRSMRKQDGGSGRMRKQS) is disordered. Residues 943–1009 (NREVNKRRVL…EGEEAIEKLF (67 aa)) adopt a coiled-coil conformation.

This sequence belongs to the NET family.

In terms of biological role, plant-specific actin binding protein. May be part of a membrane-cytoskeletal adapter complex. In Arabidopsis thaliana (Mouse-ear cress), this protein is Protein NETWORKED 1C.